Here is a 329-residue protein sequence, read N- to C-terminus: Acetyl-coenzyme A carboxylase carboxyl transferase subunit alpha (329 aa).

The CoA carboxyltransferase C-terminal domain occupies 40–294 (QLETLAARRR…KNALEKHLSE (255 aa)).

Belongs to the AccA family. In terms of assembly, acetyl-CoA carboxylase is a heterohexamer composed of biotin carboxyl carrier protein (AccB), biotin carboxylase (AccC) and two subunits each of ACCase subunit alpha (AccA) and ACCase subunit beta (AccD).

It is found in the cytoplasm. It carries out the reaction N(6)-carboxybiotinyl-L-lysyl-[protein] + acetyl-CoA = N(6)-biotinyl-L-lysyl-[protein] + malonyl-CoA. It participates in lipid metabolism; malonyl-CoA biosynthesis; malonyl-CoA from acetyl-CoA: step 1/1. Component of the acetyl coenzyme A carboxylase (ACC) complex. First, biotin carboxylase catalyzes the carboxylation of biotin on its carrier protein (BCCP) and then the CO(2) group is transferred by the carboxyltransferase to acetyl-CoA to form malonyl-CoA. The sequence is that of Acetyl-coenzyme A carboxylase carboxyl transferase subunit alpha from Prochlorococcus marinus (strain NATL2A).